The chain runs to 232 residues: Small ribosomal subunit protein uS2 (232 aa).

Belongs to the universal ribosomal protein uS2 family.

The protein is Small ribosomal subunit protein uS2 of Syntrophomonas wolfei subsp. wolfei (strain DSM 2245B / Goettingen).